A 138-amino-acid chain; its full sequence is Large ribosomal subunit protein mL43 (138 aa).

The protein belongs to the mitochondrion-specific ribosomal protein mL43 family. Component of the mitochondrial large ribosomal subunit (mt-LSU). Mature N.crassa 74S mitochondrial ribosomes consist of a small (37S) and a large (54S) subunit. The 37S small subunit contains a 16S ribosomal RNA (16S mt-rRNA) and 32 different proteins. The 54S large subunit contains a 23S rRNA (23S mt-rRNA) and 42 different proteins.

It localises to the mitochondrion. Functionally, component of the mitochondrial ribosome (mitoribosome), a dedicated translation machinery responsible for the synthesis of mitochondrial genome-encoded proteins, including at least some of the essential transmembrane subunits of the mitochondrial respiratory chain. The mitoribosomes are attached to the mitochondrial inner membrane and translation products are cotranslationally integrated into the membrane. The protein is Large ribosomal subunit protein mL43 (mrpl51) of Neurospora crassa (strain ATCC 24698 / 74-OR23-1A / CBS 708.71 / DSM 1257 / FGSC 987).